Consider the following 227-residue polypeptide: Urease accessory protein UreF (227 aa).

This sequence belongs to the UreF family. In terms of assembly, ureD, UreF and UreG form a complex that acts as a GTP-hydrolysis-dependent molecular chaperone, activating the urease apoprotein by helping to assemble the nickel containing metallocenter of UreC. The UreE protein probably delivers the nickel.

The protein resides in the cytoplasm. Functionally, required for maturation of urease via the functional incorporation of the urease nickel metallocenter. The sequence is that of Urease accessory protein UreF from Shewanella halifaxensis (strain HAW-EB4).